The following is a 412-amino-acid chain: Zinc finger protein 260 (412 aa).

C2H2-type zinc fingers lie at residues 27–49, 55–77, 83–105, 136–158, 164–186, 192–214, 220–242, 248–270, 276–298, 304–326, 332–354, 360–382, and 388–412; these read YECN…KKMH, HECT…LRSH, YKCN…QKHH, YACK…EKIH, FECN…QNIH, FKCS…QRIH, YECK…QRSH, YTCK…EKIH, YKCN…HNIH, YECN…VRIH, YECK…MRSH, YGCN…MRIH, and YQCS…IHTH.

The protein belongs to the krueppel C2H2-type zinc-finger protein family. Binds DNA. Interacts with GATA4.

The protein resides in the nucleus. Functionally, transcription factor that acts as a cardiac regulator and an effector of alpha1-adrenergic signaling. Binds to PE response elements (PERE) present in the promoter of genes such as ANF/NPPA and acts as a direct transcriptional activator of NPPA. Also acts as a cofactor with GATA4, a key cardiac regulator. The chain is Zinc finger protein 260 (ZNF260) from Homo sapiens (Human).